Consider the following 147-residue polypeptide: Large ribosomal subunit protein uL13 (147 aa).

Belongs to the universal ribosomal protein uL13 family. In terms of assembly, part of the 50S ribosomal subunit.

In terms of biological role, this protein is one of the early assembly proteins of the 50S ribosomal subunit, although it is not seen to bind rRNA by itself. It is important during the early stages of 50S assembly. This is Large ribosomal subunit protein uL13 from Kocuria rhizophila (strain ATCC 9341 / DSM 348 / NBRC 103217 / DC2201).